The primary structure comprises 307 residues: Coproporphyrin III ferrochelatase (307 aa).

Residues tyrosine 12, arginine 29, 45 to 46, serine 53, and tyrosine 124 contribute to the Fe-coproporphyrin III site; that span reads RY. Residues histidine 181 and glutamate 263 each coordinate Fe(2+).

This sequence belongs to the ferrochelatase family.

It localises to the cytoplasm. It carries out the reaction Fe-coproporphyrin III + 2 H(+) = coproporphyrin III + Fe(2+). Its pathway is porphyrin-containing compound metabolism; protoheme biosynthesis. Involved in coproporphyrin-dependent heme b biosynthesis. Catalyzes the insertion of ferrous iron into coproporphyrin III to form Fe-coproporphyrin III. This Staphylococcus epidermidis (strain ATCC 35984 / DSM 28319 / BCRC 17069 / CCUG 31568 / BM 3577 / RP62A) protein is Coproporphyrin III ferrochelatase.